We begin with the raw amino-acid sequence, 729 residues long: Fatty acid oxidation complex subunit alpha (729 aa).

Positions 1 to 189 (MLYKGDTLYL…KVGLVDAVVK (189 aa)) are enoyl-CoA hydratase/isomerase. Aspartate 296 contacts substrate. The interval 311-729 (ETPKQAAVLG…AQPVGELQTA (419 aa)) is 3-hydroxyacyl-CoA dehydrogenase. NAD(+)-binding positions include methionine 324, aspartate 343, 400–402 (VVE), lysine 407, and serine 429. Histidine 450 functions as the For 3-hydroxyacyl-CoA dehydrogenase activity in the catalytic mechanism. Asparagine 453 is a binding site for NAD(+). Positions 500 and 660 each coordinate substrate. The segment at 708 to 729 (SHNAPYYPQVEPAQPVGELQTA) is disordered.

This sequence in the N-terminal section; belongs to the enoyl-CoA hydratase/isomerase family. The protein in the C-terminal section; belongs to the 3-hydroxyacyl-CoA dehydrogenase family. As to quaternary structure, heterotetramer of two alpha chains (FadB) and two beta chains (FadA).

The enzyme catalyses a (3S)-3-hydroxyacyl-CoA + NAD(+) = a 3-oxoacyl-CoA + NADH + H(+). The catalysed reaction is a (3S)-3-hydroxyacyl-CoA = a (2E)-enoyl-CoA + H2O. It carries out the reaction a 4-saturated-(3S)-3-hydroxyacyl-CoA = a (3E)-enoyl-CoA + H2O. It catalyses the reaction (3S)-3-hydroxybutanoyl-CoA = (3R)-3-hydroxybutanoyl-CoA. The enzyme catalyses a (3Z)-enoyl-CoA = a 4-saturated (2E)-enoyl-CoA. The catalysed reaction is a (3E)-enoyl-CoA = a 4-saturated (2E)-enoyl-CoA. Its pathway is lipid metabolism; fatty acid beta-oxidation. In terms of biological role, involved in the aerobic and anaerobic degradation of long-chain fatty acids via beta-oxidation cycle. Catalyzes the formation of 3-oxoacyl-CoA from enoyl-CoA via L-3-hydroxyacyl-CoA. It can also use D-3-hydroxyacyl-CoA and cis-3-enoyl-CoA as substrate. In Cronobacter sakazakii (strain ATCC BAA-894) (Enterobacter sakazakii), this protein is Fatty acid oxidation complex subunit alpha.